The chain runs to 269 residues: Monofunctional glycosyltransferase (269 aa).

Residues 46–66 (AIITILILLIIFFGVMYFISS) form a helical membrane-spanning segment.

Belongs to the glycosyltransferase 51 family.

It is found in the cell membrane. It carries out the reaction [GlcNAc-(1-&gt;4)-Mur2Ac(oyl-L-Ala-gamma-D-Glu-L-Lys-D-Ala-D-Ala)](n)-di-trans,octa-cis-undecaprenyl diphosphate + beta-D-GlcNAc-(1-&gt;4)-Mur2Ac(oyl-L-Ala-gamma-D-Glu-L-Lys-D-Ala-D-Ala)-di-trans,octa-cis-undecaprenyl diphosphate = [GlcNAc-(1-&gt;4)-Mur2Ac(oyl-L-Ala-gamma-D-Glu-L-Lys-D-Ala-D-Ala)](n+1)-di-trans,octa-cis-undecaprenyl diphosphate + di-trans,octa-cis-undecaprenyl diphosphate + H(+). It participates in cell wall biogenesis; peptidoglycan biosynthesis. In terms of biological role, peptidoglycan polymerase that catalyzes glycan chain elongation using lipid-linked disaccharide-pentapeptide as the substrate. This Staphylococcus epidermidis (strain ATCC 35984 / DSM 28319 / BCRC 17069 / CCUG 31568 / BM 3577 / RP62A) protein is Monofunctional glycosyltransferase.